A 337-amino-acid chain; its full sequence is Manganese-dependent ADP-ribose/CDP-alcohol diphosphatase (337 aa).

At Met-1 the chain carries N-acetylmethionine. Zn(2+) is bound by residues Asp-25, Gln-27, Asp-74, Asn-110, His-241, His-278, and His-280.

The protein belongs to the ADPRibase-Mn family. In terms of assembly, monomer. Mg(2+) serves as cofactor.

The enzyme catalyses CDP-choline + H2O = phosphocholine + CMP + 2 H(+). It catalyses the reaction ADP-D-ribose + H2O = D-ribose 5-phosphate + AMP + 2 H(+). It carries out the reaction CDP-glycerol + H2O = sn-glycerol 3-phosphate + CMP + 2 H(+). Functionally, hydrolyzes ADP-ribose, IDP-ribose, CDP-glycerol, CDP-choline and CDP-ethanolamine, but not other non-reducing ADP-sugars or CDP-glucose. May be involved in immune cell signaling as suggested by the second-messenger role of ADP-ribose, which activates TRPM2 as a mediator of oxidative/nitrosative stress. This chain is Manganese-dependent ADP-ribose/CDP-alcohol diphosphatase (ADPRM), found in Bos taurus (Bovine).